A 189-amino-acid chain; its full sequence is Parkinson disease protein 7 homolog (189 aa).

Ala2 is subject to N-acetylalanine. Residues Cys46 and Cys53 are each lipidated (S-palmitoyl cysteine). Position 67 is a phosphotyrosine (Tyr67). Cys106 (nucleophile) is an active-site residue. Position 106 is a cysteine sulfinic acid (-SO2H); alternate (Cys106). The S-palmitoyl cysteine; alternate moiety is linked to residue Cys106. His126 is a catalytic residue. A Glycyl lysine isopeptide (Lys-Gly) (interchain with G-Cter in SUMO) cross-link involves residue Lys130. Lys148 is modified (N6-acetyllysine). The residue at position 182 (Lys182) is an N6-succinyllysine.

This sequence belongs to the peptidase C56 family. Homodimer. Binds EFCAB6/DJBP and PIAS2. Part of a ternary complex containing PARK7, EFCAB6/DJBP and AR. Interacts (via N-terminus) with OTUD7B. Interacts with BBS1, HIPK1, CLCF1 and MTERF. Forms a complex with PINK1 and PRKN. Interacts (via C-terminus) with NCF1; the interaction is enhanced by LPS and modulates NCF1 phosphorylation and membrane translocation. Interacts with NENF. Requires Deglycase activity does not require glutathione as a cofactor, however, glycated glutathione constitutes a PARK7 substrate. as cofactor. Post-translationally, sumoylated on Lys-130 by PIAS2 or PIAS4; which is essential for cell-growth promoting activity and transforming activity. Undergoes cleavage of a C-terminal peptide and subsequent activation of protease activity in response to oxidative stress. In terms of tissue distribution, ubiquitous. Detected on epididymal sperm. Highly expressed in testis and prostate. Detected at lower levels in heart, lung, brain, liver, kidney, seminal vesicle, caput and corpus epididymis.

It localises to the cell membrane. The protein resides in the cytoplasm. Its subcellular location is the membrane raft. It is found in the nucleus. The protein localises to the mitochondrion. It localises to the endoplasmic reticulum. It catalyses the reaction N(omega)-(1-hydroxy-2-oxopropyl)-L-arginyl-[protein] + H2O = lactate + L-arginyl-[protein] + H(+). It carries out the reaction N(6)-(1-hydroxy-2-oxopropyl)-L-lysyl-[protein] + H2O = lactate + L-lysyl-[protein] + H(+). The enzyme catalyses S-(1-hydroxy-2-oxopropyl)-L-cysteinyl-[protein] + H2O = lactate + L-cysteinyl-[protein] + H(+). The catalysed reaction is N(omega)-(1-hydroxy-2-oxoethyl)-L-arginyl-[protein] + H2O = L-arginyl-[protein] + glycolate + H(+). It catalyses the reaction N(6)-(1-hydroxy-2-oxoethyl)-L-lysyl-[protein] + H2O = glycolate + L-lysyl-[protein] + H(+). It carries out the reaction S-(1-hydroxy-2-oxoethyl)-L-cysteinyl-[protein] + H2O = glycolate + L-cysteinyl-[protein] + H(+). The enzyme catalyses N(2)-(1-hydroxy-2-oxopropyl)-dGTP + H2O = lactate + dGTP + H(+). The catalysed reaction is N(2)-(1-hydroxy-2-oxopropyl)-GTP + H2O = lactate + GTP + H(+). It catalyses the reaction N(2)-(1-hydroxy-2-oxopropyl)-GDP + H2O = lactate + GDP + H(+). It carries out the reaction N(2)-(1-hydroxy-2-oxopropyl)-GMP + H2O = lactate + GMP + H(+). The enzyme catalyses N(2)-(1-hydroxy-2-oxoethyl)-dGTP + H2O = dGTP + glycolate + H(+). The catalysed reaction is N(2)-(1-hydroxy-2-oxoethyl)-GTP + H2O = glycolate + GTP + H(+). It catalyses the reaction N(2)-(1-hydroxy-2-oxoethyl)-GDP + H2O = glycolate + GDP + H(+). It carries out the reaction N(2)-(1-hydroxy-2-oxoethyl)-GMP + H2O = glycolate + GMP + H(+). The enzyme catalyses an N(2)-(1-hydroxy-2-oxopropyl)-guanosine in RNA + H2O = a guanosine in RNA + lactate + H(+). The catalysed reaction is an N(2)-(1-hydroxy-2-oxopropyl)-2'-deoxyguanosine in DNA + H2O = a 2'-deoxyguanosine in DNA + lactate + H(+). It catalyses the reaction an N(2)-(1-hydroxy-2-oxoethyl)-guanosine in RNA + H2O = a guanosine in RNA + glycolate + H(+). It carries out the reaction an N(2)-(1-hydroxy-2-oxoethyl)-2'-deoxyguanosine in DNA + H2O = a 2'-deoxyguanosine in DNA + glycolate + H(+). Functionally, protein and nucleotide deglycase that catalyzes the deglycation of the Maillard adducts formed between amino groups of proteins or nucleotides and reactive carbonyl groups of glyoxals. Thus, functions as a protein deglycase that repairs methylglyoxal- and glyoxal-glycated proteins, and releases repaired proteins and lactate or glycolate, respectively. Deglycates cysteine, arginine and lysine residues in proteins, and thus reactivates these proteins by reversing glycation by glyoxals. Acts on early glycation intermediates (hemithioacetals and aminocarbinols), preventing the formation of advanced glycation endproducts (AGE) that cause irreversible damage. Also functions as a nucleotide deglycase able to repair glycated guanine in the free nucleotide pool (GTP, GDP, GMP, dGTP) and in DNA and RNA. Is thus involved in a major nucleotide repair system named guanine glycation repair (GG repair), dedicated to reversing methylglyoxal and glyoxal damage via nucleotide sanitization and direct nucleic acid repair. Also displays an apparent glyoxalase activity that in fact reflects its deglycase activity. Plays an important role in cell protection against oxidative stress and cell death acting as oxidative stress sensor and redox-sensitive chaperone and protease; functions probably related to its primary function. It is involved in neuroprotective mechanisms like the stabilization of NFE2L2 and PINK1 proteins, male fertility as a positive regulator of androgen signaling pathway as well as cell growth and transformation through, for instance, the modulation of NF-kappa-B signaling pathway. Eliminates hydrogen peroxide and protects cells against hydrogen peroxide-induced cell death. Required for correct mitochondrial morphology and function as well as for autophagy of dysfunctional mitochondria. Plays a role in regulating expression or stability of the mitochondrial uncoupling proteins SLC25A14 and SLC25A27 in dopaminergic neurons of the substantia nigra pars compacta and attenuates the oxidative stress induced by calcium entry into the neurons via L-type channels during pacemaking. Regulates astrocyte inflammatory responses, may modulate lipid rafts-dependent endocytosis in astrocytes and neuronal cells. In pancreatic islets, involved in the maintenance of mitochondrial reactive oxygen species (ROS) levels and glucose homeostasis in an age- and diet dependent manner. Protects pancreatic beta cells from cell death induced by inflammatory and cytotoxic setting. Binds to a number of mRNAs containing multiple copies of GG or CC motifs and partially inhibits their translation but dissociates following oxidative stress. Metal-binding protein able to bind copper as well as toxic mercury ions, enhances the cell protection mechanism against induced metal toxicity. In macrophages, interacts with the NADPH oxidase subunit NCF1 to direct NADPH oxidase-dependent ROS production, and protects against sepsis. The polypeptide is Parkinson disease protein 7 homolog (Rattus norvegicus (Rat)).